Consider the following 403-residue polypeptide: Protein IQ-DOMAIN 23 (403 aa).

A disordered region spans residues 1-43; that stretch reads MGFFGRLFGSKKKSDKAASSRDKRRWSFTTRSSNSSKRAPAVT. A Nuclear localization signal motif is present at residues 10–17; it reads SKKKSDKA. Over residues 27–43 the composition is skewed to polar residues; it reads SFTTRSSNSSKRAPAVT. Positions 115–133 are calmodulin-binding; that stretch reads QENIAAMKIQSAFRGYLAR. 2 IQ domains span residues 116–144 and 145–167; these read ENIAAMKIQSAFRGYLARRALRALKALVK and LQALVRGHIVRKQTADMLRRMQT. Disordered stretches follow at residues 176 to 208, 242 to 301, and 381 to 403; these read RARASRSSHSSASFHSSTALLFPSSSSSPRSLH, ILEV…PTSR, and GGDSDRLNRNQSAKSRMHSSFLV. The segment covering 257-267 has biased composition (basic and acidic residues); sequence LRSERNNESPR.

It belongs to the IQD family. In terms of assembly, binds to multiple calmodulin (CaM) in the presence of Ca(2+) and CaM-like proteins.

It is found in the nucleus. Its subcellular location is the nucleolus. It localises to the cytoplasm. The protein resides in the cytoskeleton. The protein localises to the cell membrane. Its function is as follows. May be involved in cooperative interactions with calmodulins or calmodulin-like proteins. Recruits calmodulin proteins to microtubules, thus being a potential scaffold in cellular signaling and trafficking. May associate with nucleic acids and regulate gene expression at the transcriptional or post-transcriptional level. This is Protein IQ-DOMAIN 23 from Arabidopsis thaliana (Mouse-ear cress).